The primary structure comprises 157 residues: Large ribosomal subunit protein mL59 (157 aa).

The protein belongs to the mitochondrion-specific ribosomal protein mL59 family. In terms of assembly, component of the mitochondrial large ribosomal subunit (mt-LSU). Mature yeast 74S mitochondrial ribosomes consist of a small (37S) and a large (54S) subunit. The 37S small subunit contains a 15S ribosomal RNA (15S mt-rRNA) and 34 different proteins. The 54S large subunit contains a 21S rRNA (21S mt-rRNA) and 46 different proteins.

The protein localises to the mitochondrion. Functionally, component of the mitochondrial ribosome (mitoribosome), a dedicated translation machinery responsible for the synthesis of mitochondrial genome-encoded proteins, including at least some of the essential transmembrane subunits of the mitochondrial respiratory chain. The mitoribosomes are attached to the mitochondrial inner membrane and translation products are cotranslationally integrated into the membrane. The polypeptide is Large ribosomal subunit protein mL59 (MRPL25) (Saccharomyces cerevisiae (strain ATCC 204508 / S288c) (Baker's yeast)).